Here is a 284-residue protein sequence, read N- to C-terminus: Bifunctional protein FolD (284 aa).

Residues 164 to 166 and serine 189 contribute to the NADP(+) site; that span reads GRS.

This sequence belongs to the tetrahydrofolate dehydrogenase/cyclohydrolase family. In terms of assembly, homodimer.

It carries out the reaction (6R)-5,10-methylene-5,6,7,8-tetrahydrofolate + NADP(+) = (6R)-5,10-methenyltetrahydrofolate + NADPH. The enzyme catalyses (6R)-5,10-methenyltetrahydrofolate + H2O = (6R)-10-formyltetrahydrofolate + H(+). It functions in the pathway one-carbon metabolism; tetrahydrofolate interconversion. In terms of biological role, catalyzes the oxidation of 5,10-methylenetetrahydrofolate to 5,10-methenyltetrahydrofolate and then the hydrolysis of 5,10-methenyltetrahydrofolate to 10-formyltetrahydrofolate. This is Bifunctional protein FolD from Listeria innocua serovar 6a (strain ATCC BAA-680 / CLIP 11262).